A 221-amino-acid chain; its full sequence is MHKVVLISLRGYREWTESLGPRREHIIQKVQARIHGALWSSFTAVGALPHHFRYDYLIALANNVPRHWIDTAVAKIRRSSPVEVDYCIGMGETPLDAYRSCGEHKEGKESNAVVAHVDIVNSTDATRINGPIHTYLRALDMLRTAAGACEDVGCIAFYLGGDNMVVYLPEPKAIYALLDRVEAPVRAGVGVSPRPYTAFVKATKGLDALRAENKTGVKVVR.

Belongs to the archaeal-type GTP cyclohydrolase family.

The catalysed reaction is GTP + 3 H2O = 2-amino-5-formylamino-6-(5-phospho-D-ribosylamino)pyrimidin-4(3H)-one + 2 phosphate + 2 H(+). Catalyzes the formation of 2-amino-5-formylamino-6-ribofuranosylamino-4(3H)-pyrimidinone ribonucleotide monophosphate and inorganic phosphate from GTP. Also has an independent pyrophosphate phosphohydrolase activity. The polypeptide is GTP cyclohydrolase III (Pyrobaculum arsenaticum (strain DSM 13514 / JCM 11321 / PZ6)).